Consider the following 213-residue polypeptide: Uracil phosphoribosyltransferase (213 aa).

Residues R78, R103, and 131 to 139 (DPMLATGGT) contribute to the 5-phospho-alpha-D-ribose 1-diphosphate site. Uracil-binding positions include I197 and 202–204 (GDA). D203 contacts 5-phospho-alpha-D-ribose 1-diphosphate.

The protein belongs to the UPRTase family. It depends on Mg(2+) as a cofactor.

The enzyme catalyses UMP + diphosphate = 5-phospho-alpha-D-ribose 1-diphosphate + uracil. The protein operates within pyrimidine metabolism; UMP biosynthesis via salvage pathway; UMP from uracil: step 1/1. Its activity is regulated as follows. Allosterically activated by GTP. Catalyzes the conversion of uracil and 5-phospho-alpha-D-ribose 1-diphosphate (PRPP) to UMP and diphosphate. The sequence is that of Uracil phosphoribosyltransferase from Bifidobacterium longum (strain DJO10A).